The chain runs to 649 residues: FAS-associated factor 1 (649 aa).

The UBA domain maps to 1-57 (MASNMDREMILADFQACTGIENIDEAITLLEQNNWDLVAAINGVIPQENGILQSDFG). Residues 55 to 84 (DFGGETMPGPTFDPASPPAPAPAPSSSAFR) are disordered. Residue Ser319 is modified to Phosphoserine. Positions 568-645 (NAEPVSKLRI…NLFPQETLFL (78 aa)) constitute a UBX domain. Thr579 is modified (phosphothreonine). Ser581 is modified (phosphoserine).

In terms of assembly, interacts with CDT1 and ATPase VCP/p97. Interacts (via UBA domain) with FAS (via death domain). Interacts (via UBA domain) with NLRP12 (via DAPIN/PYRIN domain). Central nervous system.

It localises to the nucleus. Ubiquitin-binding protein. Required for the progression of DNA replication forks by targeting DNA replication licensing factor CDT1 for degradation. Potentiates but cannot initiate FAS-induced apoptosis. This Rattus norvegicus (Rat) protein is FAS-associated factor 1 (Faf1).